The primary structure comprises 521 residues: Exoglucanase 1 (521 aa).

The first 17 residues, 1–17, serve as a signal peptide directing secretion; it reads MLAKFAALAALVASANA. The segment at 18–450 is catalytic; that stretch reads QAVCSLTAET…FGPIGSTFSG (433 aa). Residue Asn32 is glycosylated (N-linked (GlcNAc...) asparagine). The active-site Nucleophile is Glu229. Glu234 (proton donor) is an active-site residue. The N-linked (GlcNAc...) asparagine glycan is linked to Asn287. A disordered region spans residues 447–486; it reads TFSGGSSGTPPSNPSSSVKPVTSTAKPSSTSTASNPSGTG. The tract at residues 451 to 485 is linker; the sequence is GSSGTPPSNPSSSVKPVTSTAKPSSTSTASNPSGT. The 37-residue stretch at 485–521 folds into the CBM1 domain; sequence TGAAHWAQCGGIGFSGPTTCQSPYTCQKINDYYSQCV. 2 cysteine pairs are disulfide-bonded: Cys493–Cys510 and Cys504–Cys520.

This sequence belongs to the glycosyl hydrolase 7 (cellulase C) family.

It localises to the secreted. It catalyses the reaction Hydrolysis of (1-&gt;4)-beta-D-glucosidic linkages in cellulose and cellotetraose, releasing cellobiose from the non-reducing ends of the chains.. This Neurospora crassa (strain ATCC 24698 / 74-OR23-1A / CBS 708.71 / DSM 1257 / FGSC 987) protein is Exoglucanase 1 (cbh-1).